Reading from the N-terminus, the 307-residue chain is MASWVFCNRCFQSPHRKSSFSLTSCGHVYCHSCLLKGTKNECVICQAPCQTVLLSKHTNSNIQTFFLGIDGLCKKYSQETSQISEFQEKHRRRLVAFYQEKISQLEESLRKSVLQIKQLQSMRSSQQPAFNKIKNSVSTKPNGYLFLPPNSSLPDRIESMDIDLTPPARKPEMSAGPSRISVISPPQDGRMGSVTCRGPQHLSLTPSHASMTKASRVPPLQMPYKELSPPPASQLSSRATQGPSPSVSSSWTGPPRQPISISGLLQRQCAGSASPRGMDTEKMSPFLPSTPTNLRSVASPWHACVHR.

An RING-type zinc finger spans residues C7–Q46. Residues R91–S124 are a coiled coil. The segment at L164–P291 is disordered. Polar residues-rich tracts occupy residues L202–K213, S233–T252, and I259–G271.

Specifically expressed in meiocytes of the gonads.

The protein localises to the nucleus. The protein resides in the chromosome. Its pathway is protein modification; protein sumoylation. SUMO E3 ligase that acts as a regulator of crossing-over during meiosis: required to couple chromosome synapsis to the formation of crossover-specific recombination complexes. Localizes to recombination sites and stabilizes meiosis-specific recombination factors, such as MutS-gamma complex proteins (MSH4 and MSH5) and TEX11. May mediate sumoylation of target proteins MSH4 and/or MSH5, leading to enhance their binding to recombination sites. Acts as a limiting factor for crossover designation and/or reinforcement and plays an antagonist role with CCNB1IP1/HEI10 in the regulation of meiotic recombination. The polypeptide is Probable E3 SUMO-protein ligase RNF212 (Rnf212) (Mus musculus (Mouse)).